The chain runs to 156 residues: H/ACA ribonucleoprotein complex subunit 2-like protein (156 aa).

This sequence belongs to the eukaryotic ribosomal protein eL8 family. As to quaternary structure, component of the small nucleolar ribonucleoprotein particle containing H/ACA-type snoRNAs (H/ACA snoRNPs).

It localises to the nucleus. Its subcellular location is the nucleolus. In terms of biological role, required for ribosome biogenesis. Part of a complex which catalyzes pseudouridylation of rRNA. This involves the isomerization of uridine such that the ribose is subsequently attached to C5, instead of the normal N1. Pseudouridine ('psi') residues may serve to stabilize the conformation of rRNAs. The protein is H/ACA ribonucleoprotein complex subunit 2-like protein of Arabidopsis thaliana (Mouse-ear cress).